Reading from the N-terminus, the 257-residue chain is Cytochrome c oxidase subunit 3 (257 aa).

The next 6 helical transmembrane spans lie at 15-35 (PWPLATGMGAFAMTSGLVKWF), 82-102 (GMILFIISEVFFFVSFFWGFF), 124-144 (FLSALLNTSILLASGVTVTWA), 156-176 (CLQGLLFTVLLGLYFSFLQGL), 194-214 (FFLATGFHGLHVLIGTIFLMI), and 235-255 (AWYWHFVDVVWLFLYLSIYWW).

Belongs to the cytochrome c oxidase subunit 3 family. In terms of assembly, component of the cytochrome c oxidase (complex IV, CIV), a multisubunit enzyme composed of a catalytic core of 3 subunits and several supernumerary subunits. The complex exists as a monomer or a dimer and forms supercomplexes (SCs) in the inner mitochondrial membrane with ubiquinol-cytochrome c oxidoreductase (cytochrome b-c1 complex, complex III, CIII).

The protein localises to the mitochondrion inner membrane. It catalyses the reaction 4 Fe(II)-[cytochrome c] + O2 + 8 H(+)(in) = 4 Fe(III)-[cytochrome c] + 2 H2O + 4 H(+)(out). Functionally, component of the cytochrome c oxidase, the last enzyme in the mitochondrial electron transport chain which drives oxidative phosphorylation. The respiratory chain contains 3 multisubunit complexes succinate dehydrogenase (complex II, CII), ubiquinol-cytochrome c oxidoreductase (cytochrome b-c1 complex, complex III, CIII) and cytochrome c oxidase (complex IV, CIV), that cooperate to transfer electrons derived from NADH and succinate to molecular oxygen, creating an electrochemical gradient over the inner membrane that drives transmembrane transport and the ATP synthase. Cytochrome c oxidase is the component of the respiratory chain that catalyzes the reduction of oxygen to water. Electrons originating from reduced cytochrome c in the intermembrane space (IMS) are transferred via the dinuclear copper A center (CU(A)) of subunit 2 and heme A of subunit 1 to the active site in subunit 1, a binuclear center (BNC) formed by heme A3 and copper B (CU(B)). The BNC reduces molecular oxygen to 2 water molecules using 4 electrons from cytochrome c in the IMS and 4 protons from the mitochondrial matrix. The polypeptide is Cytochrome c oxidase subunit 3 (COIII) (Artemia franciscana (Brine shrimp)).